Reading from the N-terminus, the 158-residue chain is Cathelicidin-6 (158 aa).

The first 29 residues, 1–29, serve as a signal peptide directing secretion; sequence METQRASLSLGRWSLWLLLLGLALPSASA. The propeptide occupies 30 to 131; it reads QALSYREAVL…NVTCEELQSV (102 aa). Cystine bridges form between Cys86–Cys97 and Cys108–Cys125.

The protein belongs to the cathelicidin family.

The protein resides in the secreted. Functionally, exerts a potent antimicrobial activity against Gram-negative and Gram-positive bacteria, including methicillin-resistant Staphylococcus aureus, and fungi. The sequence is that of Cathelicidin-6 (CATHL6) from Bos taurus (Bovine).